A 340-amino-acid chain; its full sequence is DNA-directed RNA polymerase subunit alpha (340 aa).

An alpha N-terminal domain (alpha-NTD) region spans residues 1–233; that stretch reads MIQDEIKVST…DLFIPLINSE (233 aa). Residues 265–340 are alpha C-terminal domain (alpha-CTD); the sequence is TKDVAFKHIF…IQLPKNKNYL (76 aa).

Belongs to the RNA polymerase alpha chain family. As to quaternary structure, in plastids the minimal PEP RNA polymerase catalytic core is composed of four subunits: alpha, beta, beta', and beta''. When a (nuclear-encoded) sigma factor is associated with the core the holoenzyme is formed, which can initiate transcription.

The protein resides in the plastid. The protein localises to the chloroplast. The catalysed reaction is RNA(n) + a ribonucleoside 5'-triphosphate = RNA(n+1) + diphosphate. In terms of biological role, DNA-dependent RNA polymerase catalyzes the transcription of DNA into RNA using the four ribonucleoside triphosphates as substrates. This Marchantia polymorpha (Common liverwort) protein is DNA-directed RNA polymerase subunit alpha.